A 224-amino-acid chain; its full sequence is Orotate phosphoribosyltransferase (224 aa).

Residue lysine 29 coordinates 5-phospho-alpha-D-ribose 1-diphosphate. An orotate-binding site is contributed by 37–38 (FF). Residues 75–76 (YK), arginine 105, lysine 106, lysine 109, histidine 111, and 130–138 (DDVITAGTS) contribute to the 5-phospho-alpha-D-ribose 1-diphosphate site. Threonine 134 and arginine 162 together coordinate orotate.

This sequence belongs to the purine/pyrimidine phosphoribosyltransferase family. PyrE subfamily. As to quaternary structure, homodimer. Mg(2+) serves as cofactor.

The catalysed reaction is orotidine 5'-phosphate + diphosphate = orotate + 5-phospho-alpha-D-ribose 1-diphosphate. It participates in pyrimidine metabolism; UMP biosynthesis via de novo pathway; UMP from orotate: step 1/2. Functionally, catalyzes the transfer of a ribosyl phosphate group from 5-phosphoribose 1-diphosphate to orotate, leading to the formation of orotidine monophosphate (OMP). The chain is Orotate phosphoribosyltransferase from Bordetella pertussis (strain Tohama I / ATCC BAA-589 / NCTC 13251).